Consider the following 125-residue polypeptide: Ribosome-binding factor A (125 aa).

Belongs to the RbfA family. In terms of assembly, monomer. Binds 30S ribosomal subunits, but not 50S ribosomal subunits or 70S ribosomes.

The protein resides in the cytoplasm. In terms of biological role, one of several proteins that assist in the late maturation steps of the functional core of the 30S ribosomal subunit. Associates with free 30S ribosomal subunits (but not with 30S subunits that are part of 70S ribosomes or polysomes). Required for efficient processing of 16S rRNA. May interact with the 5'-terminal helix region of 16S rRNA. This chain is Ribosome-binding factor A, found in Xylella fastidiosa (strain M23).